The primary structure comprises 59 residues: Large ribosomal subunit protein uL30 (59 aa).

The protein belongs to the universal ribosomal protein uL30 family. As to quaternary structure, part of the 50S ribosomal subunit.

This is Large ribosomal subunit protein uL30 from Desulfatibacillum aliphaticivorans.